The chain runs to 978 residues: Serine/threonine-protein kinase PLK4 (978 aa).

Residues 13-266 (FQVLDLLGKG…LSGILDHPFI (254 aa)) enclose the Protein kinase domain. ATP is bound by residues 19 to 27 (LGKGGFACV) and Lys42. The active-site Proton acceptor is Asp137. Polar residues-rich tracts occupy residues 271 to 282 (LNTKYSSPTRQH) and 291 to 304 (SLDSGTGTMATIST). Disordered stretches follow at residues 271 to 381 (LNTK…TRTS), 489 to 578 (IEQP…AERL), 788 to 818 (AWKNSSGKSEKQDQQGCSNGQSQPVLPSSPS), and 838 to 869 (AQTTNPAFPGKSRKTSPSKTSRHKQSPAQPIP). Positions 324–335 (RTSDIWPRDPKH) are enriched in basic and acidic residues. Composition is skewed to polar residues over residues 351-362 (TENVTTGSSSHV) and 371-381 (AQYSGLKTRTS). Composition is skewed to basic and acidic residues over residues 518-527 (GSDSVSKDFD) and 536-566 (ESRRRQNHRSDSERQTRRAEKSRSGGRDKSL). Residues 565–678 (SLGELTEPLN…AKFVQLVRKL (114 aa)) form the Cryptic POLO box 1 (CPB1) domain. The region spanning 679–792 (TPKVTLYSKH…GRRPPAWKNS (114 aa)) is the Cryptic POLO box 2 (CPB2) domain. Residues 801–818 (QQGCSNGQSQPVLPSSPS) show a composition bias toward polar residues. Over residues 848-862 (KSRKTSPSKTSRHKQ) the composition is skewed to basic residues. Positions 895-973 (HVCKMAFVDG…LPAVIKTLAT (79 aa)) constitute a POLO box domain.

It belongs to the protein kinase superfamily. Ser/Thr protein kinase family. CDC5/Polo subfamily. As to quaternary structure, homodimer. Post-translationally, ubiquitinated; leading to its degradation by the proteasome.

It is found in the cytoplasm. The protein resides in the cytoskeleton. The protein localises to the microtubule organizing center. Its subcellular location is the centrosome. It localises to the centriole. It catalyses the reaction L-seryl-[protein] + ATP = O-phospho-L-seryl-[protein] + ADP + H(+). The catalysed reaction is L-threonyl-[protein] + ATP = O-phospho-L-threonyl-[protein] + ADP + H(+). Serine/threonine-protein kinase that plays a central role in centriole duplication. Able to trigger procentriole formation on the surface of the mother centriole cylinder, leading to the recruitment of centriole biogenesis proteins. When overexpressed, it is able to induce centrosome amplification through the simultaneous generation of multiple procentrioles adjoining each parental centriole during S phase. The chain is Serine/threonine-protein kinase PLK4 from Nematostella vectensis (Starlet sea anemone).